A 490-amino-acid chain; its full sequence is MRINPPTYGSEISSIEKKNRGCIVQIIGPVLDVAFPPGKMPNIYNALVVKGRDTEQMNVTCEVQQLLGNNRVRAVAMNDTDGLMRGMEVIDTGTPITVPVGGSTLGRIFNVLGEPVDNFGPVDTNTTSTIHRSAPAFIQLDTKLSIFETGIKVVDFLAPYRRGGKIGLFGGAGVGKTVLIMELINNIAKAHGGVSVFGGVGERTREGNDLYMEMKESGVINENNITESKVALVYGQMNEPPGARMRVGLTALTMAEYFRDVNEQDVLLFIDNIFRFVQAGSEVSALLGRMPSAVGYQPTLSTEMGSLQERITSTKEGSITSIQAVYVPADDLTDPAPATTFAHLDATTVLSRGLAAKGIYPAVDPLDSTSMMLQPRIVGEEHYETAQKVKQTLQRYKELQDIIAILGLDELSEEDRLTVARARKIERFLSQPFFVAEVFTGSPGKYVGLAETIRGFNLILSGELDSLPEQAFYLVGNIDEATEKAMNLKT.

Residue 170 to 177 participates in ATP binding; that stretch reads GGAGVGKT.

This sequence belongs to the ATPase alpha/beta chains family. F-type ATPases have 2 components, CF(1) - the catalytic core - and CF(0) - the membrane proton channel. CF(1) has five subunits: alpha(3), beta(3), gamma(1), delta(1), epsilon(1). CF(0) has four main subunits: a(1), b(1), b'(1) and c(9-12).

It is found in the plastid membrane. The catalysed reaction is ATP + H2O + 4 H(+)(in) = ADP + phosphate + 5 H(+)(out). Produces ATP from ADP in the presence of a proton gradient across the membrane. The catalytic sites are hosted primarily by the beta subunits. In Cuscuta japonica (Japanese dodder), this protein is ATP synthase subunit beta, plastid (atpB).